The chain runs to 220 residues: Ribosomal RNA large subunit methyltransferase E (220 aa).

Positions 60, 62, 92, 108, and 133 each coordinate S-adenosyl-L-methionine. Lys-173 functions as the Proton acceptor in the catalytic mechanism. The tract at residues 195–220 is disordered; the sequence is APRKPKASRDKSSETFILGRHLKRPR.

This sequence belongs to the class I-like SAM-binding methyltransferase superfamily. RNA methyltransferase RlmE family.

The protein resides in the cytoplasm. It catalyses the reaction uridine(2552) in 23S rRNA + S-adenosyl-L-methionine = 2'-O-methyluridine(2552) in 23S rRNA + S-adenosyl-L-homocysteine + H(+). Functionally, specifically methylates the uridine in position 2552 of 23S rRNA at the 2'-O position of the ribose in the fully assembled 50S ribosomal subunit. The polypeptide is Ribosomal RNA large subunit methyltransferase E (Burkholderia lata (strain ATCC 17760 / DSM 23089 / LMG 22485 / NCIMB 9086 / R18194 / 383)).